We begin with the raw amino-acid sequence, 310 residues long: Olfactory receptor 10N1 (310 aa).

Topologically, residues 1 to 23 are extracellular; that stretch reads MDNYTLLNEFILLGIPQTQGLET. Asparagine 3 carries N-linked (GlcNAc...) asparagine glycosylation. The helical transmembrane segment at 24–44 threads the bilayer; sequence LLFVVFLFIYFFTLLGNSLIF. The Cytoplasmic segment spans residues 45–55; sequence TAIISSSTLHT. Residues 56 to 76 traverse the membrane as a helical segment; sequence PMYFFLGLLSVFDMLFPSVTC. Residues 77–95 lie on the Extracellular side of the membrane; the sequence is PKMLFYLSVRSPAISYKGC. Cysteine 95 and cysteine 187 are disulfide-bonded. A helical transmembrane segment spans residues 96–116; the sequence is AAQLFFYHLLGSTEGCLYSVM. Residues 117–136 lie on the Cytoplasmic side of the membrane; it reads AYDRYVAICHPLRYMLIMKP. A helical membrane pass occupies residues 137-157; sequence GVCVSLVIIAWLVGCLHATIL. Topologically, residues 158–202 are extracellular; it reads TSLTFQLVYCASNQVDYFFCDLPAVLPLACTDSKLARKVGSINVG. The helical transmembrane segment at 203 to 223 threads the bilayer; it reads FLALMLLFSVCVSYVHIGVAI. At 224–237 the chain is on the cytoplasmic side; sequence LRIRSAEGRQKAFS. Residues 238–258 form a helical membrane-spanning segment; sequence TCSAHLTAILCAYGPVIIIYL. Residues 259–264 lie on the Extracellular side of the membrane; sequence QRTPNP. A helical membrane pass occupies residues 265-285; sequence LLGAVVQILNNIVSPMLNSLI. Residues 286–310 lie on the Cytoplasmic side of the membrane; sequence YSLRNKEVKRSLRRVFQNITFHGQK.

This sequence belongs to the G-protein coupled receptor 1 family.

Its subcellular location is the cell membrane. Its function is as follows. Odorant receptor. In Mus musculus (Mouse), this protein is Olfactory receptor 10N1.